The sequence spans 677 residues: Electrogenic aspartate/glutamate antiporter SLC25A12, mitochondrial (677 aa).

Position 2 is an N-acetylalanine (Ala2). Residues 2–294 are regulatory N-terminal domain; it reads AVKVHTTKRG…TLADIERIAP (293 aa). Topologically, residues 2–329 are mitochondrial intermembrane; sequence AVKVHTTKRG…WLQIAESAYR (328 aa). 4 EF-hand domains span residues 40–85, 86–121, 122–156, and 157–192; these read VQRY…SVLC, APDS…TIIH, HHIP…FLQE, and LQLE…IRSH. Positions 65, 67, 69, 71, and 76 each coordinate Ca(2+). The tract at residues 295 to 310 is linker loop domain; the sequence is LAEGALPYNLAELQRQ. The segment at 320–612 is carrier domain; sequence WLQIAESAYR…RWFYIDFGGL (293 aa). Solcar repeat units follow at residues 324–416, 424–508, and 516–604; these read AESA…VRDK, IPLP…CKLL, and VGGI…LQRW. A helical transmembrane segment spans residues 330-347; it reads FTLGSVAGAVGATAVYPI. Over 348 to 390 the chain is Mitochondrial matrix; the sequence is DLVKTRMQNQRGTGSVVGELMYKNSFDCFKKVLRYEGFFGLYR. Residues 391–410 form a helical membrane-spanning segment; sequence GLIPQLIGVAPEKAIKLTVN. Over 411–433 the chain is Mitochondrial intermembrane; it reads DFVRDKFTKRDGSIPLPAEILAG. A helical transmembrane segment spans residues 434–447; sequence GCAGGSQVIFTNPL. Residues 448–482 are Mitochondrial matrix-facing; it reads EIVKIRLQVAGEITTGPRVSALNVLQDLGLFGLYK. A helical transmembrane segment spans residues 483–502; the sequence is GAKACFLRDIPFSAIYFPVY. Residues 503–521 are Mitochondrial intermembrane-facing; it reads AHCKLLLADENGRVGGINL. The chain crosses the membrane as a helical span at residues 522 to 539; sequence LTAGALAGVPAASLVTPA. The Mitochondrial matrix portion of the chain corresponds to 540-578; sequence DVIKTRLQVAARAGQTTYSGVVDCFRKILREEGPSAFWK. The helical transmembrane segment at 579–598 threads the bilayer; it reads GTAARVFRSSPQFGVTLVTY. Residues 599–677 are Mitochondrial intermembrane-facing; the sequence is ELLQRWFYID…AQPKAAAAAQ (79 aa). Residues 613–677 are C-terminal domain; that stretch reads KPSGSEPTPK…AQPKAAAAAQ (65 aa).

It belongs to the mitochondrial carrier (TC 2.A.29) family. Homodimer (via N-terminus).

It localises to the mitochondrion inner membrane. The enzyme catalyses L-aspartate(in) + L-glutamate(out) + H(+)(out) = L-aspartate(out) + L-glutamate(in) + H(+)(in). It carries out the reaction 3-sulfino-L-alanine(out) + L-glutamate(in) + H(+)(in) = 3-sulfino-L-alanine(in) + L-glutamate(out) + H(+)(out). The catalysed reaction is 3-sulfino-L-alanine(out) + L-aspartate(in) = 3-sulfino-L-alanine(in) + L-aspartate(out). Mitochondrial electrogenic aspartate/glutamate antiporter that favors efflux of aspartate and entry of glutamate and proton within the mitochondria as part of the malate-aspartate shuttle. Also mediates the uptake of L-cysteinesulfinate (3-sulfino-L-alanine) by mitochondria in exchange of L-glutamate and proton. Can also exchange L-cysteinesulfinate with aspartate in their anionic form without any proton translocation. Lacks transport activity towards L-glutamine or gamma-aminobutyric acid (GABA). The chain is Electrogenic aspartate/glutamate antiporter SLC25A12, mitochondrial from Mus musculus (Mouse).